The primary structure comprises 110 residues: U1-lycotoxin-Ls1dd (110 aa).

An N-terminal signal peptide occupies residues 1 to 20 (MKFVLLFGVLLVTLFSYSSA). Positions 21–44 (EMLDDFDQADEDELLSLIEKEEAR) are excised as a propeptide. Disulfide bonds link cysteine 47-cysteine 62, cysteine 54-cysteine 71, cysteine 61-cysteine 89, and cysteine 73-cysteine 87.

It belongs to the neurotoxin 19 (CSTX) family. 03 subfamily. Expressed by the venom gland.

The protein localises to the secreted. This chain is U1-lycotoxin-Ls1dd, found in Lycosa singoriensis (Wolf spider).